A 141-amino-acid chain; its full sequence is MSIEQTFSIIKPNAMKKNAIGDIVSMFEANGLKIAAAKITVLTTAKAEEFYAEHKARPFFGELVSFMTSGPVMLMCLQGEGAVLKNREIMGATDPKKANPGTVRAKFGDNVGENAVHGSDSPESAARELALFFEKHEICNV.

Residues lysine 11, phenylalanine 59, arginine 87, threonine 93, arginine 104, and asparagine 114 each contribute to the ATP site. Catalysis depends on histidine 117, which acts as the Pros-phosphohistidine intermediate.

This sequence belongs to the NDK family. Homotetramer. The cofactor is Mg(2+).

It is found in the cytoplasm. The enzyme catalyses a 2'-deoxyribonucleoside 5'-diphosphate + ATP = a 2'-deoxyribonucleoside 5'-triphosphate + ADP. It carries out the reaction a ribonucleoside 5'-diphosphate + ATP = a ribonucleoside 5'-triphosphate + ADP. Major role in the synthesis of nucleoside triphosphates other than ATP. The ATP gamma phosphate is transferred to the NDP beta phosphate via a ping-pong mechanism, using a phosphorylated active-site intermediate. The chain is Nucleoside diphosphate kinase from Bdellovibrio bacteriovorus (strain ATCC 15356 / DSM 50701 / NCIMB 9529 / HD100).